We begin with the raw amino-acid sequence, 466 residues long: Asparagine--tRNA ligase (466 aa).

The protein belongs to the class-II aminoacyl-tRNA synthetase family. As to quaternary structure, homodimer.

It is found in the cytoplasm. The enzyme catalyses tRNA(Asn) + L-asparagine + ATP = L-asparaginyl-tRNA(Asn) + AMP + diphosphate + H(+). This Escherichia coli O157:H7 protein is Asparagine--tRNA ligase.